Here is a 639-residue protein sequence, read N- to C-terminus: UPF0313 protein CLJ_B0249 (639 aa).

The Radical SAM core domain maps to 295 to 566; that stretch reads AIKEVKFSIT…RMQRSLLQFS (272 aa). Residues C309, C313, and C316 each contribute to the [4Fe-4S] cluster site. Residues 597–639 form a disordered region; the sequence is YNKPYKKSHKKNNAKNKNNNYNKNKDVSKKNKKNSLSKHKKRK. Composition is skewed to basic residues over residues 600–610 and 626–639; these read PYKKSHKKNNA and KNKKNSLSKHKKRK.

This sequence belongs to the UPF0313 family. It depends on [4Fe-4S] cluster as a cofactor.

This chain is UPF0313 protein CLJ_B0249, found in Clostridium botulinum (strain 657 / Type Ba4).